The following is an 86-amino-acid chain: Translation initiation factor IF-1 2 (86 aa).

An S1-like domain is found at 1–72; that stretch reads MAKEELLEME…SKGRITFRHI (72 aa).

The protein belongs to the IF-1 family. As to quaternary structure, component of the 30S ribosomal translation pre-initiation complex which assembles on the 30S ribosome in the order IF-2 and IF-3, IF-1 and N-formylmethionyl-tRNA(fMet); mRNA recruitment can occur at any time during PIC assembly.

It is found in the cytoplasm. Its function is as follows. One of the essential components for the initiation of protein synthesis. Stabilizes the binding of IF-2 and IF-3 on the 30S subunit to which N-formylmethionyl-tRNA(fMet) subsequently binds. Helps modulate mRNA selection, yielding the 30S pre-initiation complex (PIC). Upon addition of the 50S ribosomal subunit IF-1, IF-2 and IF-3 are released leaving the mature 70S translation initiation complex. The sequence is that of Translation initiation factor IF-1 2 from Polynucleobacter asymbioticus (strain DSM 18221 / CIP 109841 / QLW-P1DMWA-1) (Polynucleobacter necessarius subsp. asymbioticus).